The sequence spans 303 residues: MPEASSPRRTPQNVPYQDLPHLVNADGQYLFCRYWKPSGTPKALIFVSHGAGEHCGRYDELAQMLKRLDMLVFAHDHVGHGQSEGERMVVSDFQVFVRDLLQHVNTVQKDYPEVPVFLLGHSMGGAISILAAAERPTHFSGMILISPLILANPESASTLKVLAAKLLNFVLPNISLGRIDSSVLSRNKSEVDLYNSDPLICHAGVKVCFGIQLLNAVSRVERAMPRLTLPFLLLQGSADRLCDSKGAYLLMESSPSQDKTLKMYEGAYHVLHKELPEVTNSVLHEINTWVSHRIAVAGARCLP.

Thr-10 is modified (phosphothreonine). Tyr-58 is subject to 3'-nitrotyrosine. The active-site Nucleophile is Ser-122. At Ser-189 the chain carries Phosphoserine. Active-site charge relay system residues include Asp-239 and His-269.

It belongs to the AB hydrolase superfamily. Monoacylglycerol lipase family. In terms of assembly, homodimer. As to expression, ubiquitous. Highly expressed in adipose tissue, adrenal gland, ovary, heart, spleen, lung, skeletal muscle, kidney and testis. Highly expressed throughout the brain.

It localises to the cytoplasm. It is found in the cytosol. The protein localises to the membrane. The catalysed reaction is Hydrolyzes glycerol monoesters of long-chain fatty acids.. It carries out the reaction a 1-acylglycerol + H2O = glycerol + a fatty acid + H(+). It catalyses the reaction a 2-acylglycerol + H2O = glycerol + a fatty acid + H(+). The enzyme catalyses 1-octanoylglycerol + H2O = octanoate + glycerol + H(+). The catalysed reaction is 2-(5Z,8Z,11Z,14Z-eicosatetraenoyl)-glycerol + H2O = glycerol + (5Z,8Z,11Z,14Z)-eicosatetraenoate + H(+). It carries out the reaction 1-decanoylglycerol + H2O = decanoate + glycerol + H(+). It catalyses the reaction 1-dodecanoylglycerol + H2O = dodecanoate + glycerol + H(+). The enzyme catalyses 1-tetradecanoylglycerol + H2O = tetradecanoate + glycerol + H(+). The catalysed reaction is 2-hexadecanoylglycerol + H2O = glycerol + hexadecanoate + H(+). It carries out the reaction 1-(9Z-octadecenoyl)-glycerol + H2O = glycerol + (9Z)-octadecenoate + H(+). It catalyses the reaction 2-(9Z-octadecenoyl)-glycerol + H2O = glycerol + (9Z)-octadecenoate + H(+). The enzyme catalyses 2-(9Z,12Z-octadecadienoyl)-glycerol + H2O = (9Z,12Z)-octadecadienoate + glycerol + H(+). The catalysed reaction is 1-(5Z,8Z,11Z,14Z-eicosatetraenoyl)-glycerol + H2O = glycerol + (5Z,8Z,11Z,14Z)-eicosatetraenoate + H(+). It carries out the reaction 1-(9Z,12Z-octadecadienoyl)-glycerol + H2O = (9Z,12Z)-octadecadienoate + glycerol + H(+). It catalyses the reaction 1-hexadecanoylglycerol + H2O = glycerol + hexadecanoate + H(+). The enzyme catalyses 1-octadecanoylglycerol + H2O = octadecanoate + glycerol + H(+). The catalysed reaction is prostaglandin E2 1-glyceryl ester + H2O = prostaglandin E2 + glycerol + H(+). It carries out the reaction prostaglandin D2-1-glycerol ester + H2O = prostaglandin D2 + glycerol + H(+). It catalyses the reaction 2-glyceryl-15-deoxy-Delta(12,14)-prostaglandin J2 + H2O = 15-deoxy-Delta(12,14)-prostaglandin J2 + glycerol + H(+). The enzyme catalyses prostaglandin F2alpha 1-glyceryl ester + H2O = prostaglandin F2alpha + glycerol + H(+). It functions in the pathway glycerolipid metabolism; triacylglycerol degradation. Converts monoacylglycerides to free fatty acids and glycerol. Hydrolyzes the endocannabinoid 2-arachidonoylglycerol, and thereby contributes to the regulation of endocannabinoid signaling, nociperception and perception of pain. Regulates the levels of fatty acids that serve as signaling molecules and promote cancer cell migration, invasion and tumor growth. The polypeptide is Monoglyceride lipase (Rattus norvegicus (Rat)).